The primary structure comprises 248 residues: Ribonuclease PH (248 aa).

Phosphate is bound by residues Arg93 and 131-133 (GTR).

It belongs to the RNase PH family. As to quaternary structure, homohexameric ring arranged as a trimer of dimers.

The enzyme catalyses tRNA(n+1) + phosphate = tRNA(n) + a ribonucleoside 5'-diphosphate. Its function is as follows. Phosphorolytic 3'-5' exoribonuclease that plays an important role in tRNA 3'-end maturation. Removes nucleotide residues following the 3'-CCA terminus of tRNAs; can also add nucleotides to the ends of RNA molecules by using nucleoside diphosphates as substrates, but this may not be physiologically important. Probably plays a role in initiation of 16S rRNA degradation (leading to ribosome degradation) during starvation. This Bifidobacterium longum (strain NCC 2705) protein is Ribonuclease PH.